The sequence spans 204 residues: Urease accessory protein UreG (204 aa).

11–18 (GPVGAGKT) serves as a coordination point for GTP.

The protein belongs to the SIMIBI class G3E GTPase family. UreG subfamily. As to quaternary structure, homodimer. UreD, UreF and UreG form a complex that acts as a GTP-hydrolysis-dependent molecular chaperone, activating the urease apoprotein by helping to assemble the nickel containing metallocenter of UreC. The UreE protein probably delivers the nickel.

It localises to the cytoplasm. In terms of biological role, facilitates the functional incorporation of the urease nickel metallocenter. This process requires GTP hydrolysis, probably effectuated by UreG. The polypeptide is Urease accessory protein UreG (Staphylococcus aureus (strain bovine RF122 / ET3-1)).